We begin with the raw amino-acid sequence, 107 residues long: uncharacterized protein (107 aa).

The next 3 helical transmembrane spans lie at 20–40 (FISLISSSTSELPLFVVEVGI), 49–69 (PAILSILVLNALEVSSFISTV), and 86–106 (VVMLKILAFLLLEGIIIKLFL).

It localises to the membrane. This is an uncharacterized protein from Saccharomyces cerevisiae (strain ATCC 204508 / S288c) (Baker's yeast).